The primary structure comprises 264 residues: Phosphonoacetaldehyde hydrolase (264 aa).

D9 serves as the catalytic Nucleophile. Mg(2+) contacts are provided by D9 and A11. The active-site Schiff-base intermediate with substrate is K50. D183 provides a ligand contact to Mg(2+).

The protein belongs to the HAD-like hydrolase superfamily. PhnX family. In terms of assembly, homodimer. Requires Mg(2+) as cofactor.

It carries out the reaction phosphonoacetaldehyde + H2O = acetaldehyde + phosphate + H(+). Its function is as follows. Involved in phosphonate degradation. The chain is Phosphonoacetaldehyde hydrolase from Bacillus cereus (strain G9842).